Reading from the N-terminus, the 400-residue chain is Apolipoprotein N-acyltransferase (400 aa).

Transmembrane regions (helical) follow at residues 16 to 36 (AISP…VLFV), 42 to 62 (FGVG…GLRY), 67 to 87 (FLIP…FYIG), 97 to 117 (FAFL…IVPE), and 123 to 143 (SYIG…WILF). A CN hydrolase domain is found at 181–400 (AQSAVSQDFD…AIITPFVSSR (220 aa)). Glutamate 222 functions as the Proton acceptor in the catalytic mechanism. The active site involves lysine 283. Cysteine 332 functions as the Nucleophile in the catalytic mechanism. A helical transmembrane segment spans residues 377–397 (YGSVIFHATNLSPAAIITPFV).

Belongs to the CN hydrolase family. Apolipoprotein N-acyltransferase subfamily.

The protein localises to the cell inner membrane. It catalyses the reaction N-terminal S-1,2-diacyl-sn-glyceryl-L-cysteinyl-[lipoprotein] + a glycerophospholipid = N-acyl-S-1,2-diacyl-sn-glyceryl-L-cysteinyl-[lipoprotein] + a 2-acyl-sn-glycero-3-phospholipid + H(+). Its pathway is protein modification; lipoprotein biosynthesis (N-acyl transfer). Its function is as follows. Catalyzes the phospholipid dependent N-acylation of the N-terminal cysteine of apolipoprotein, the last step in lipoprotein maturation. This chain is Apolipoprotein N-acyltransferase, found in Helicobacter hepaticus (strain ATCC 51449 / 3B1).